Consider the following 423-residue polypeptide: Phytoene synthase, chloroplastic (423 aa).

The transit peptide at 1–136 (MVVAILRVVS…DAYDRCGEVC (136 aa)) directs the protein to the chloroplast.

Belongs to the phytoene/squalene synthase family. Monomer.

The protein resides in the plastid. It localises to the chloroplast. It carries out the reaction 2 (2E,6E,10E)-geranylgeranyl diphosphate = 15-cis-phytoene + 2 diphosphate. It participates in carotenoid biosynthesis; phytoene biosynthesis; all-trans-phytoene from geranylgeranyl diphosphate: step 1/1. In terms of biological role, catalyzes the reaction from prephytoene diphosphate to phytoene. This Narcissus pseudonarcissus (Daffodil) protein is Phytoene synthase, chloroplastic (PSY).